Here is a 287-residue protein sequence, read N- to C-terminus: Beta-lactamase GES-1 (287 aa).

The first 18 residues, 1–18 (MRFIHALLLAGIAHSAYA), serve as a signal peptide directing secretion. Cys-63 and Cys-233 are disulfide-bonded. Ser-64 serves as the catalytic Nucleophile; acyl-ester intermediate. A beta-lactam contacts are provided by Lys-67, Ser-125, Glu-161, and Thr-232.

This sequence belongs to the class-A beta-lactamase family. Monomer. May form dimers.

It catalyses the reaction a beta-lactam + H2O = a substituted beta-amino acid. Inhibited by the beta-lactamase-blocking agents clavulanic acid, tazobactam, sulbactam and tazobactam and the carbapenem, imipenem. Inhibition by imipenem may involve Gly-165. Its function is as follows. Extended-spectrum beta-lactamase (ESBL) which confers resistance to penicillins, as well as first, second, third and fourth-generation cephalosporins. Has ceftazidime-hydrolyzing activity. Inactive against the carbapenems, imipenem, meropenem, ertapenem and doripenem. However, weak hydrolytic activity with respect to imipenem has also been reported. The protein is Beta-lactamase GES-1 of Klebsiella pneumoniae.